Reading from the N-terminus, the 293-residue chain is Mediator of RNA polymerase II transcription subunit 27 (293 aa).

This sequence belongs to the Mediator complex subunit 27 family. As to quaternary structure, component of the Mediator complex, which includes at least CDK8, MED4, MED6, MED11, MED14, MED17, MED18, MED20, MED21, MED22, MED27, MED28, MED30 and MED31.

The protein localises to the nucleus. Component of the Mediator complex, a coactivator involved in the regulated transcription of nearly all RNA polymerase II-dependent genes. Mediator functions as a bridge to convey information from gene-specific regulatory proteins to the basal RNA polymerase II transcription machinery. Mediator is recruited to promoters by direct interactions with regulatory proteins and serves as a scaffold for the assembly of a functional preinitiation complex with RNA polymerase II and the general transcription factors. Required for activated transcription of the MtnA gene. In Drosophila melanogaster (Fruit fly), this protein is Mediator of RNA polymerase II transcription subunit 27 (MED27).